The primary structure comprises 282 residues: MASFQRKGLQARILSTEEEEKLKRDQALVSAFKQQKLEKEAQKNWDLFYKRNSTNFFKDRHWTTREFEELRSCREYEGQKLTLLEAGCGVGNCLFPLLEEDLNLFAYACDFSPRAVDYVKQHPLYNAERCKVFQCDLTRDDLLDHVPPESVDAVTLIFVLSAVHPEKMRLVLLNVYKVLKPGRSVLFRDYGLNDHAMLRFKAGSKLGENFYVRQDGTRSYFFTDEFLAQLFVDAGYEEVVNEYVFRETVNKKEGLCVPRVFLQSKFRKPPKDPAPTSDSASL.

7 residues coordinate S-adenosyl-L-methionine: Trp-45, Tyr-49, Gly-87, Asp-110, Asp-136, Leu-137, and Ile-157.

Belongs to the methyltransferase superfamily. METL family. In terms of assembly, monomer. Interacts with SARS1/SerRS; interaction is mediated via tRNA(Ser) and is required for N(3)-methylcytidine methylation.

The protein resides in the cytoplasm. It is found in the nucleus. It catalyses the reaction cytidine(32) in tRNA(Ser) + S-adenosyl-L-methionine = N(3)-methylcytidine(32) in tRNA(Ser) + S-adenosyl-L-homocysteine + H(+). S-adenosyl-L-methionine-dependent methyltransferase that mediates N(3)-methylcytidine modification of residue 32 of the tRNA anticodon loop of tRNA(Ser), including tRNA(Ser)(UGA) and tRNA(Ser)(GCU). Interaction with SARS1/SerRS is required for N(3)-methylcytidine methylation. The polypeptide is tRNA N(3)-cytidine methyltransferase METTL6 (Mus musculus (Mouse)).